The primary structure comprises 569 residues: Sulfite reductase [NADPH] hemoprotein beta-component (569 aa).

4 residues coordinate [4Fe-4S] cluster: Cys433, Cys439, Cys478, and Cys482. Cys482 provides a ligand contact to siroheme.

Belongs to the nitrite and sulfite reductase 4Fe-4S domain family. In terms of assembly, alpha(8)-beta(8). The alpha component is a flavoprotein, the beta component is a hemoprotein. Siroheme serves as cofactor. [4Fe-4S] cluster is required as a cofactor.

The enzyme catalyses hydrogen sulfide + 3 NADP(+) + 3 H2O = sulfite + 3 NADPH + 4 H(+). It functions in the pathway sulfur metabolism; hydrogen sulfide biosynthesis; hydrogen sulfide from sulfite (NADPH route): step 1/1. In terms of biological role, component of the sulfite reductase complex that catalyzes the 6-electron reduction of sulfite to sulfide. This is one of several activities required for the biosynthesis of L-cysteine from sulfate. This Shewanella sediminis (strain HAW-EB3) protein is Sulfite reductase [NADPH] hemoprotein beta-component.